We begin with the raw amino-acid sequence, 136 residues long: Cyclase aurE (136 aa).

This sequence belongs to the aurE cyclase family.

It participates in polyketide biosynthesis. Functionally, cyclase; part of the gene cluster that mediates the biosynthesis of aurovertins, fungal polyketides that exhibit potent inhibition of adenosine triphosphate synthase. Tha biosynthesis starts with the HR-PKS aurA that selects propionate as the starter unit; synthesizes a hexa-ene chain through the repeated functions of the KR and DH domains in the first six iterations; selectively introduces three alpha-methyl substitutions at C4, C6, and C16 using the S-adensylmethionine-dependent cMET; and shuts off KR and DH in the last three iterations to afford a 1,3,5-triketo portion that can undergo intramolecular cyclization to yield the alpha-pyrone intermediate. AurE may act as a cyclase and enhances the rate of pyrone formation and product release of aurA. The methyltransferase aurB then methylates the C17 hydroxyl group. C17 methylation is required to initiate epoxidation by the downstream monooxygenase aurC. The monooxygenase aurC and the epoxide hydrolase aurD can iteratively transform the terminal triene portion of the methylated precursor into the dioxabicyclo[3.2.1]octane scaffold of aurovertin E. Epoxidation modifications of the precursor occur in two separate steps; bis-epoxidation of the two terminal olefins takes place first, followed by another epoxidation that occurs at C7-C8 after tetrahydrofuran formation. The O-acyltransferase aurG converts aurovertin E to aurovertin A. This chain is Cyclase aurE, found in Calcarisporium arbuscula (Dendryphion arbuscula).